We begin with the raw amino-acid sequence, 181 residues long: Transcription termination/antitermination protein NusG (181 aa).

A KOW domain is found at 130–158 (PGETVRVNDGPFSDFNGIVEEVDYEKNRL).

This sequence belongs to the NusG family. In terms of assembly, monomer. Interacts with the transcription termination factor Rho and with RNA polymerase.

In terms of biological role, participates in transcription elongation, termination and antitermination. In the absence of Rho, increases the rate of transcription elongation by the RNA polymerase (RNAP), probably by partially suppressing pausing. In the presence of Rho, modulates most Rho-dependent termination events by interacting with the RNAP to render the complex more susceptible to the termination activity of Rho. May be required to overcome a kinetic limitation of Rho to function at certain terminators. Also involved in ribosomal RNA transcriptional antitermination. In Buchnera aphidicola subsp. Baizongia pistaciae (strain Bp), this protein is Transcription termination/antitermination protein NusG.